Reading from the N-terminus, the 205-residue chain is Glycerol-3-phosphate acyltransferase (205 aa).

The Periplasmic portion of the chain corresponds to 1 to 3 (MSA). The helical transmembrane segment at 4–24 (IAPGMILFAYLCGSISSAILV) threads the bilayer. At 25-52 (CRIAGLPDPRESGSGNPGATNVLRIGGK) the chain is on the cytoplasmic side. Residues 53–73 (GAAVAVLIFDILKGMLPVWGA) traverse the membrane as a helical segment. The Periplasmic portion of the chain corresponds to 74-80 (YALGITP). Residues 81 to 101 (FWLGLIAIAACLGHIWPVFFG) form a helical membrane-spanning segment. Over 102 to 111 (FKGGKGVATA) the chain is Cytoplasmic. The helical transmembrane segment at 112-132 (FGAIAPIGWDLTGVIAGTWLL) threads the bilayer. At 133–137 (TVLLS) the chain is on the periplasmic side. A helical transmembrane segment spans residues 138–158 (GYSSLGAIVSALIAPFYVWWF). At 159-205 (KPQFTFPVSMLSCLILLRHHDNIQRLWRRQETKIWTKLKKKREKESK) the chain is on the cytoplasmic side.

It belongs to the PlsY family. As to quaternary structure, probably interacts with PlsX.

The protein resides in the cell inner membrane. It carries out the reaction sn-glycerol 3-phosphate + an acyl-CoA = a 1-acyl-sn-glycero-3-phosphate + CoA. The enzyme catalyses a fatty acyl-[ACP] + sn-glycerol 3-phosphate = a 1-acyl-sn-glycero-3-phosphate + holo-[ACP]. The protein operates within lipid metabolism; phospholipid metabolism. Its function is as follows. Catalyzes the transfer of an acyl group from acyl-ACP to glycerol-3-phosphate (G3P) to form lysophosphatidic acid (LPA). This enzyme can also utilize acyl-CoA as fatty acyl donor, but not acyl-PO(4). The sequence is that of Glycerol-3-phosphate acyltransferase from Salmonella arizonae (strain ATCC BAA-731 / CDC346-86 / RSK2980).